A 1011-amino-acid chain; its full sequence is Beta-galactosidase A (1011 aa).

The first 19 residues, Met1–Ala19, serve as a signal peptide directing secretion. Substrate contacts are provided by residues Tyr96, Asn140 to Glu142, and Asn199. The active-site Proton donor is the Glu200. 2 disulfides stabilise this stretch: Cys205-Cys206 and Cys267-Cys316. Glu299 serves as the catalytic Nucleophile. Tyr365 contributes to the substrate binding site. Residues Asn374, Asn456, Asn625, Asn707, Asn763, Asn780, and Asn917 are each glycosylated (N-linked (GlcNAc...) asparagine).

The protein belongs to the glycosyl hydrolase 35 family. As to quaternary structure, monomer.

The protein resides in the secreted. It catalyses the reaction Hydrolysis of terminal non-reducing beta-D-galactose residues in beta-D-galactosides.. Its function is as follows. Cleaves beta-linked terminal galactosyl residues from gangliosides, glycoproteins, and glycosaminoglycans. Has high in vitro transglycosylation activity with p-nitrophenyl-beta-D-galactopyranoside, methyl-beta-D-galactopyranoside or lactose as a donor and galactose as an acceptor. The polypeptide is Beta-galactosidase A (lacA) (Penicillium sp).